Consider the following 297-residue polypeptide: ATP synthase gamma chain (297 aa).

The protein belongs to the ATPase gamma chain family. In terms of assembly, F-type ATPases have 2 components, CF(1) - the catalytic core - and CF(0) - the membrane proton channel. CF(1) has five subunits: alpha(3), beta(3), gamma(1), delta(1), epsilon(1). CF(0) has three main subunits: a, b and c.

It is found in the cell membrane. In terms of biological role, produces ATP from ADP in the presence of a proton gradient across the membrane. The gamma chain is believed to be important in regulating ATPase activity and the flow of protons through the CF(0) complex. This chain is ATP synthase gamma chain, found in Arthrobacter sp. (strain FB24).